Reading from the N-terminus, the 100-residue chain is Ubiquinol-cytochrome-C reductase complex subunit IX, mitochondrial (100 aa).

The N-terminal 30 residues, 1–30 (MQTHVRRVALQALRPCLRAGLMAPKFPVRF), are a transit peptide targeting the mitochondrion. The helical transmembrane segment at 66 to 86 (LLMRLFFAFVAYVVAMKVFGA) threads the bilayer.

As to quaternary structure, plants bc1 complex contains 10 subunits; 3 respiratory subunits, 2 core proteins and 5 low-molecular weight proteins.

The protein localises to the mitochondrion inner membrane. Its function is as follows. This is a component of the ubiquinol-cytochrome c reductase complex (complex III or cytochrome b-c1 complex), which is part of the mitochondrial respiratory chain. The protein is Ubiquinol-cytochrome-C reductase complex subunit IX, mitochondrial of Euglena gracilis.